We begin with the raw amino-acid sequence, 433 residues long: Glutamate-1-semialdehyde 2,1-aminomutase (433 aa).

K272 bears the N6-(pyridoxal phosphate)lysine mark.

It belongs to the class-III pyridoxal-phosphate-dependent aminotransferase family. HemL subfamily. As to quaternary structure, homodimer. Pyridoxal 5'-phosphate serves as cofactor.

The protein localises to the cytoplasm. The enzyme catalyses (S)-4-amino-5-oxopentanoate = 5-aminolevulinate. It functions in the pathway porphyrin-containing compound metabolism; protoporphyrin-IX biosynthesis; 5-aminolevulinate from L-glutamyl-tRNA(Glu): step 2/2. Its pathway is porphyrin-containing compound metabolism; chlorophyll biosynthesis. The sequence is that of Glutamate-1-semialdehyde 2,1-aminomutase from Synechococcus sp. (strain WH7803).